Here is a 418-residue protein sequence, read N- to C-terminus: Mitochondrial outer membrane protein SLC25A46 (418 aa).

A phosphoserine mark is found at Ser32 and Ser35. Phosphothreonine is present on Thr45. Positions 46–96 (PPDIPGSRNLHWGEKSPSYGVPSAPPTLEGPAEEPFPGGGDGPRPGRSSEQ) are disordered. A Solcar 1 repeat occupies 96–187 (QLNRFAGFGI…GIISEFTPLP (92 aa)). Transmembrane regions (helical) follow at residues 103 to 123 (FGIG…CIVL), 167 to 187 (FIVQ…TPLP), 202 to 222 (HLLL…ASLI), 258 to 278 (LLPL…HYII), 314 to 334 (FPEL…LYPL), and 382 to 402 (VFGF…HATI). The stretch at 311-416 (DAYFPELIAN…KIIYSTLLQN (106 aa)) is one Solcar 2 repeat.

Belongs to the mitochondrial carrier (TC 2.A.29) family. Associates with the mitochondrial contact site and cristae organizing system (MICOS) complex. May associate with the endoplasmic reticulum membrane protein complex (EMC). As to expression, widely expressed. Highly expressed in hindbrain, spinal cord and brain coronal sections containing corpus callosum, fornix, optic chiasm, thalamus, hypothalamus, midbrain, pons and cerebellum.

The protein resides in the mitochondrion outer membrane. In terms of biological role, transmembrane protein of the mitochondrial outer membrane that controls mitochondrial organization. May regulate the assembly of the MICOS (mitochondrial contact site and cristae organizing system) complex which is essential to the biogenesis and dynamics of mitochondrial cristae, the inwards folds of the inner mitochondrial membrane. Through its interaction with the EMC (endoplasmic reticulum membrane protein complex), could regulate mitochondrial lipid homeostasis and thereby mitochondrial fission. This chain is Mitochondrial outer membrane protein SLC25A46, found in Rattus norvegicus (Rat).